A 280-amino-acid polypeptide reads, in one-letter code: Protoheme IX farnesyltransferase 2 (280 aa).

9 helical membrane passes run 12-32, 35-55, 76-96, 98-118, 129-149, 158-178, 199-221, 226-248, and 255-275; these read VIWL…GGVD, LFSL…FNHY, LITP…GISL, FLLL…FYAV, WLNI…GYAL, AVLI…ALAF, ERAV…WLYL, GAGG…YAAV, and MWKM…ALMI.

Belongs to the UbiA prenyltransferase family. Protoheme IX farnesyltransferase subfamily.

The protein localises to the cell membrane. The catalysed reaction is heme b + (2E,6E)-farnesyl diphosphate + H2O = Fe(II)-heme o + diphosphate. Its pathway is porphyrin-containing compound metabolism; heme O biosynthesis; heme O from protoheme: step 1/1. Converts heme B (protoheme IX) to heme O by substitution of the vinyl group on carbon 2 of heme B porphyrin ring with a hydroxyethyl farnesyl side group. This Pyrobaculum aerophilum (strain ATCC 51768 / DSM 7523 / JCM 9630 / CIP 104966 / NBRC 100827 / IM2) protein is Protoheme IX farnesyltransferase 2.